Here is a 70-residue protein sequence, read N- to C-terminus: Insulin (70 aa).

Intrachain disulfides connect Cys7-Cys56, Cys19-Cys69, and Cys55-Cys60. Positions 33–49 (FVDSLAGYSKHQNGGIS) are cleaved as a propeptide — c peptide.

The protein belongs to the insulin family. Heterodimer of a B chain and an A chain linked by two disulfide bonds.

Its subcellular location is the secreted. In terms of biological role, insulin decreases blood glucose concentration. It increases cell permeability to monosaccharides, amino acids and fatty acids. It accelerates glycolysis, the pentose phosphate cycle, and glycogen synthesis in liver. In Torpedo marmorata (Marbled electric ray), this protein is Insulin (ins).